An 89-amino-acid chain; its full sequence is Small ribosomal subunit protein uS15 (89 aa).

Belongs to the universal ribosomal protein uS15 family. Part of the 30S ribosomal subunit. Forms a bridge to the 50S subunit in the 70S ribosome, contacting the 23S rRNA.

One of the primary rRNA binding proteins, it binds directly to 16S rRNA where it helps nucleate assembly of the platform of the 30S subunit by binding and bridging several RNA helices of the 16S rRNA. In terms of biological role, forms an intersubunit bridge (bridge B4) with the 23S rRNA of the 50S subunit in the ribosome. The protein is Small ribosomal subunit protein uS15 of Colwellia psychrerythraea (strain 34H / ATCC BAA-681) (Vibrio psychroerythus).